We begin with the raw amino-acid sequence, 208 residues long: Capsid protein (208 aa).

Over residues 1-12 the composition is skewed to basic and acidic residues; sequence MPPKRQNTETRK. Positions 1–23 are disordered; that stretch reads MPPKRQNTETRKARQNRARRSRQ. Positions 13 to 22 are enriched in basic residues; sequence ARQNRARRSR.

The protein localises to the virion. Its function is as follows. Capsid protein self-assembles to form a quasi spherical capsid, about 25-35 nm. This Pelargonium zonate spot virus (isolate Tomato/Italy/1982) (PZSV) protein is Capsid protein.